Here is an 85-residue protein sequence, read N- to C-terminus: uncharacterized protein (85 aa).

Its subcellular location is the mitochondrion. This is an uncharacterized protein from Paramecium tetraurelia.